We begin with the raw amino-acid sequence, 904 residues long: Endoplasmic reticulum metallopeptidase 1 (904 aa).

M1 carries the N-acetylmethionine modification. The Cytoplasmic portion of the chain corresponds to 1–63 (MEWGSESAAV…PGGSGGASRG (63 aa)). Residues 1-65 (MEWGSESAAV…GSGGASRGAG (65 aa)) form a disordered region. Positions 55–65 (GGSGGASRGAG) are enriched in gly residues. The chain crosses the membrane as a helical span at residues 64–84 (AGTGLSEVRAALGLALYLIAL). The Lumenal portion of the chain corresponds to 85–399 (RTLVQLSLQQ…AASKYRHGNM (315 aa)). N-linked (GlcNAc...) asparagine glycosylation occurs at N182. A disulfide bond links C204 and C222. Residues H205 and D217 each coordinate Zn(2+). Residue E251 is the Proton acceptor of the active site. Zn(2+) contacts are provided by E252, E278, and H354. A helical membrane pass occupies residues 400 to 420 (VFFDVLGLFVIAYPSRIGSII). Residues 421 to 457 (NYMVVMGVVLYLGKKFLQPKHKTGNYKKDFLCGLGIT) are Cytoplasmic-facing. The helical transmembrane segment at 458–478 (LISWFTSLVTVLIIAVFISLI) threads the bilayer. The Lumenal segment spans residues 479–489 (GQSLSWYNHFY). A helical transmembrane segment spans residues 490-510 (VSVCLYGTATVAKIILIHTLA). The Cytoplasmic segment spans residues 511 to 519 (KRFYYMNAS). A helical membrane pass occupies residues 520 to 540 (AQYLGEVFFDISLFVHCCFLV). A topological domain (lumenal) is located at residue T541. The chain crosses the membrane as a helical span at residues 542–562 (LTYQGLCSAFISAVWVAFPLL). At 563–579 (TKLCVHKDFKQHGAQGK) the chain is on the cytoplasmic side. A helical transmembrane segment spans residues 580–600 (FIAFYLLGMFIPYLYALYLIW). The Lumenal segment spans residues 601–621 (AVFEMFTPILGRSGSEIPPDV). Residues 622–642 (VLASILAGCTMILSSYFINFI) traverse the membrane as a helical segment. The Cytoplasmic segment spans residues 643–651 (YLAKSTKKT). The helical transmembrane segment at 652–672 (MLTLTLVCAITFLLVCSGTFF) threads the bilayer. The Lumenal segment spans residues 673–904 (PYSSNPANPK…WVCTYDLFVF (232 aa)). N730 carries an N-linked (GlcNAc...) asparagine glycan.

This sequence belongs to the peptidase M28 family. Requires Zn(2+) as cofactor.

It localises to the endoplasmic reticulum membrane. Within the ovary, required for the organization of somatic cells and oocytes into discrete follicular structures. This chain is Endoplasmic reticulum metallopeptidase 1, found in Homo sapiens (Human).